Reading from the N-terminus, the 303-residue chain is Acetylglutamate kinase (303 aa).

Residues 75-76, Arg-97, and Asn-194 contribute to the substrate site; that span reads GG.

It belongs to the acetylglutamate kinase family. ArgB subfamily.

The protein localises to the cytoplasm. It carries out the reaction N-acetyl-L-glutamate + ATP = N-acetyl-L-glutamyl 5-phosphate + ADP. It functions in the pathway amino-acid biosynthesis; L-arginine biosynthesis; N(2)-acetyl-L-ornithine from L-glutamate: step 2/4. In terms of biological role, catalyzes the ATP-dependent phosphorylation of N-acetyl-L-glutamate. This Gloeobacter violaceus (strain ATCC 29082 / PCC 7421) protein is Acetylglutamate kinase.